The primary structure comprises 416 residues: Imidazolonepropionase (416 aa).

Positions 78 and 80 each coordinate Fe(3+). The Zn(2+) site is built by His-78 and His-80. 4-imidazolone-5-propanoate-binding residues include Arg-87, Tyr-150, and His-183. Tyr-150 is a binding site for N-formimidoyl-L-glutamate. Residue His-248 coordinates Fe(3+). His-248 lines the Zn(2+) pocket. Residue Gln-251 coordinates 4-imidazolone-5-propanoate. Asp-323 lines the Fe(3+) pocket. Position 323 (Asp-323) interacts with Zn(2+). 2 residues coordinate N-formimidoyl-L-glutamate: Asn-325 and Gly-327. Residue Thr-328 participates in 4-imidazolone-5-propanoate binding.

Belongs to the metallo-dependent hydrolases superfamily. HutI family. Zn(2+) is required as a cofactor. Requires Fe(3+) as cofactor.

It localises to the cytoplasm. The catalysed reaction is 4-imidazolone-5-propanoate + H2O = N-formimidoyl-L-glutamate. It functions in the pathway amino-acid degradation; L-histidine degradation into L-glutamate; N-formimidoyl-L-glutamate from L-histidine: step 3/3. Functionally, catalyzes the hydrolytic cleavage of the carbon-nitrogen bond in imidazolone-5-propanoate to yield N-formimidoyl-L-glutamate. It is the third step in the universal histidine degradation pathway. The chain is Imidazolonepropionase from Vibrio campbellii (strain ATCC BAA-1116).